Here is a 597-residue protein sequence, read N- to C-terminus: Aspartate--tRNA(Asp/Asn) ligase (597 aa).

Glutamate 178 lines the L-aspartate pocket. The tract at residues 202–205 (QLFK) is aspartate. Arginine 224 lines the L-aspartate pocket. ATP contacts are provided by residues 224 to 226 (RDE) and glutamine 233. Histidine 458 is a binding site for L-aspartate. Glutamate 488 contributes to the ATP binding site. Residue arginine 495 coordinates L-aspartate. 540 to 543 (GLDR) lines the ATP pocket.

This sequence belongs to the class-II aminoacyl-tRNA synthetase family. Type 1 subfamily. In terms of assembly, homodimer.

The protein resides in the cytoplasm. The catalysed reaction is tRNA(Asx) + L-aspartate + ATP = L-aspartyl-tRNA(Asx) + AMP + diphosphate. Aspartyl-tRNA synthetase with relaxed tRNA specificity since it is able to aspartylate not only its cognate tRNA(Asp) but also tRNA(Asn). Reaction proceeds in two steps: L-aspartate is first activated by ATP to form Asp-AMP and then transferred to the acceptor end of tRNA(Asp/Asn). This Cyanothece sp. (strain PCC 7425 / ATCC 29141) protein is Aspartate--tRNA(Asp/Asn) ligase.